Consider the following 255-residue polypeptide: Myogenic factor 5 (255 aa).

Positions 83–134 (DRRKAATMRERRRLKKVNQAFDTLKRCTTTNPNQRLPKVEILRNAIRYIESL) constitute a bHLH domain. The segment at 217–249 (SEQPGLPLQDPASLSPVASTDSQPATPGASSSR) is disordered. Over residues 232-249 (PVASTDSQPATPGASSSR) the composition is skewed to polar residues.

In terms of assembly, efficient DNA binding requires dimerization with another bHLH protein.

The protein resides in the nucleus. Acts as a transcriptional activator that promotes transcription of muscle-specific target genes and plays a role in muscle differentiation. Together with MYOG and MYOD1, co-occupies muscle-specific gene promoter core region during myogenesis. Induces fibroblasts to differentiate into myoblasts. Probable sequence specific DNA-binding protein. This is Myogenic factor 5 (MYF5) from Bos taurus (Bovine).